A 533-amino-acid polypeptide reads, in one-letter code: MQSSSEHISDVLIIGSGAAGLSLALRLAPHCKVTVLSKGPLNEGATFYAQGGIAAVFDETDSISSHVDDTLIAGAGLCDKEAVEFIASNARSCVQWLIDQGVLFDTETSANGEERYHLTREGGHSHRRILHTADATGKEVETTLVGKASNHPNISVKERCNAVDLITSNKIGLAGTKRVVGAYVWNRELEKVETFRAKAVVLATGGAAKVYQYTTNPDISSGDGIAMAWRAGCRVANLEFNQFHPTCLFHPQARNFLLTEALRGEGAYLKRPDGSRFMLDFDPRGELAPRDIVARAIDHEMKRLGADCMYLDISHKPTDFVMQHFPMIYEKLLSLGIDLTKEAIPIVPAAHYTCGGVMVDQHGRTDLDGLYAIGEVSYTGLHGANRMASNSLLECLVYGWSAAEDILTRLPTAKLAKHLPDWDESRVDNSDERVVIQHNWHELRLFMWDYVGIVRTTKRLERALRRINTLQQEIDEYYANFRISNNLLELRNLVQVAELIVRCAMERKESRGLHYTLDYPDQIENPQPTILHP.

Residues 16–19, K38, 45–52, and D223 contribute to the FAD site; these read SGAA and ATFYAQGG. The active-site Proton donor/acceptor is R290. Residues E375 and 391–392 each bind FAD; that span reads SL.

This sequence belongs to the FAD-dependent oxidoreductase 2 family. NadB subfamily. It depends on FAD as a cofactor.

The protein resides in the cytoplasm. The enzyme catalyses L-aspartate + O2 = iminosuccinate + H2O2. Its pathway is cofactor biosynthesis; NAD(+) biosynthesis; iminoaspartate from L-aspartate (oxidase route): step 1/1. In terms of biological role, catalyzes the oxidation of L-aspartate to iminoaspartate, the first step in the de novo biosynthesis of NAD(+). The polypeptide is L-aspartate oxidase (nadB) (Yersinia pestis).